A 134-amino-acid polypeptide reads, in one-letter code: Prefoldin subunit 4 (134 aa).

A2 is subject to N-acetylalanine. S125 bears the Phosphoserine mark.

Belongs to the prefoldin subunit beta family. As to quaternary structure, heterohexamer of two PFD-alpha type and four PFD-beta type subunits. Interacts with URI1; the interaction is phosphorylation-dependent and occurs in a growth-dependent manner.

It localises to the nucleus. The protein localises to the cytoplasm. Its subcellular location is the mitochondrion. Functionally, binds specifically to cytosolic chaperonin (c-CPN) and transfers target proteins to it. Binds to nascent polypeptide chain and promotes folding in an environment in which there are many competing pathways for nonnative proteins. The sequence is that of Prefoldin subunit 4 (PFDN4) from Homo sapiens (Human).